Reading from the N-terminus, the 364-residue chain is Probable dual-specificity RNA methyltransferase RlmN (364 aa).

The Proton acceptor role is filled by Glu-107. The Radical SAM core domain maps to 113–346; that stretch reads HDYGNSVCVT…ATIRREQGSD (234 aa). An intrachain disulfide couples Cys-120 to Cys-351. Cys-127, Cys-131, and Cys-134 together coordinate [4Fe-4S] cluster. S-adenosyl-L-methionine contacts are provided by residues 177-178, Ser-209, 232-234, and Asn-308; these read GE and SLH. The active-site S-methylcysteine intermediate is the Cys-351.

Belongs to the radical SAM superfamily. RlmN family. [4Fe-4S] cluster serves as cofactor.

It localises to the cytoplasm. The enzyme catalyses adenosine(2503) in 23S rRNA + 2 reduced [2Fe-2S]-[ferredoxin] + 2 S-adenosyl-L-methionine = 2-methyladenosine(2503) in 23S rRNA + 5'-deoxyadenosine + L-methionine + 2 oxidized [2Fe-2S]-[ferredoxin] + S-adenosyl-L-homocysteine. It carries out the reaction adenosine(37) in tRNA + 2 reduced [2Fe-2S]-[ferredoxin] + 2 S-adenosyl-L-methionine = 2-methyladenosine(37) in tRNA + 5'-deoxyadenosine + L-methionine + 2 oxidized [2Fe-2S]-[ferredoxin] + S-adenosyl-L-homocysteine. Specifically methylates position 2 of adenine 2503 in 23S rRNA and position 2 of adenine 37 in tRNAs. Confers resistance to some classes of antibiotics. This Staphylococcus haemolyticus (strain JCSC1435) protein is Probable dual-specificity RNA methyltransferase RlmN.